We begin with the raw amino-acid sequence, 554 residues long: Terpene synthase 17 (554 aa).

Mg(2+)-binding residues include Asp-306, Asp-310, and Glu-458. A DDXXD motif motif is present at residues 306–310 (DDTYD).

Belongs to the terpene synthase family. Tpsa subfamily. The cofactor is Mg(2+). Mn(2+) serves as cofactor. In terms of tissue distribution, mostly expressed in stem and trichomes, to a lower extent in leaves, flowers and roots and, at low levels, in fruits.

The catalysed reaction is (2Z,6Z)-farnesyl diphosphate = beta-bisabolene + diphosphate. It carries out the reaction (2E,6E)-farnesyl diphosphate = (+)-valencene + diphosphate. The enzyme catalyses (2E,6E)-farnesyl diphosphate = (E)-beta-farnesene + diphosphate. It catalyses the reaction (2E,6E)-farnesyl diphosphate = gamma-gurjunene + diphosphate. The catalysed reaction is (2Z,6Z)-farnesyl diphosphate = (E)-gamma-bisabolene + diphosphate. It carries out the reaction (2E)-geranyl diphosphate = limonene + diphosphate. The enzyme catalyses (2E)-geranyl diphosphate = beta-myrcene + diphosphate. It catalyses the reaction (2E)-geranyl diphosphate = (E)-beta-ocimene + diphosphate. The catalysed reaction is (2E)-geranyl diphosphate = terpinolene + diphosphate. It carries out the reaction (2E)-geranyl diphosphate = gamma-terpinene + diphosphate. The enzyme catalyses (2Z,6Z)-farnesyl diphosphate = (Z)-gamma-bisabolene + diphosphate. It catalyses the reaction (2E,6E)-farnesyl diphosphate = (1S,5S,6R)-alpha-bergamotene + diphosphate. The catalysed reaction is (2Z,6Z)-farnesyl diphosphate = (1S,5S,6S)-alpha-bergamotene + diphosphate. It participates in secondary metabolite biosynthesis; terpenoid biosynthesis. Sesquiterpene synthase involved in the biosynthesis of volatile compounds. Mediates the conversion of (2E,6E)-farnesyl diphosphate (FPP) into gamma-gurjunene, (E)-beta-farnesene and (+)-valencene, and of (2Z,6Z)-farnesyl diphosphate ((ZZ)-FPP) into (E)-alpha-bergamotene and (Z)-gamma-bisabolene as well as beta-bisabolene, (Z)-alpha-bergamotene and (E)-gamma-bisabolene to a lower extent. Can act with a low efficiency as a monoterpene synthase with geranyl diphosphate (GPP) as substrate, thus producing beta-myrcene, (E)-beta-ocimene, limonene, terpinolene, gamma-terpinene and (Z)-beta-ocimene. This Solanum lycopersicum (Tomato) protein is Terpene synthase 17.